A 260-amino-acid polypeptide reads, in one-letter code: Hydroxyethylthiazole kinase (260 aa).

Met49 contributes to the substrate binding site. ATP-binding residues include Arg124 and Thr170. Gly197 is a substrate binding site.

Belongs to the Thz kinase family. Requires Mg(2+) as cofactor.

The catalysed reaction is 5-(2-hydroxyethyl)-4-methylthiazole + ATP = 4-methyl-5-(2-phosphooxyethyl)-thiazole + ADP + H(+). It participates in cofactor biosynthesis; thiamine diphosphate biosynthesis; 4-methyl-5-(2-phosphoethyl)-thiazole from 5-(2-hydroxyethyl)-4-methylthiazole: step 1/1. Its function is as follows. Catalyzes the phosphorylation of the hydroxyl group of 4-methyl-5-beta-hydroxyethylthiazole (THZ). The chain is Hydroxyethylthiazole kinase from Yersinia enterocolitica serotype O:8 / biotype 1B (strain NCTC 13174 / 8081).